We begin with the raw amino-acid sequence, 441 residues long: Ribulose bisphosphate carboxylase large chain (441 aa).

The residue at position 5 (lysine 5) is an N6,N6,N6-trimethyllysine. Substrate-binding residues include asparagine 114 and threonine 164. The active-site Proton acceptor is lysine 166. Lysine 168 provides a ligand contact to substrate. Mg(2+) is bound by residues lysine 192, aspartate 194, and glutamate 195. At lysine 192 the chain carries N6-carboxylysine. The active-site Proton acceptor is the histidine 285. 3 residues coordinate substrate: arginine 286, histidine 318, and serine 370.

Belongs to the RuBisCO large chain family. Type I subfamily. As to quaternary structure, heterohexadecamer of 8 large chains and 8 small chains; disulfide-linked. The disulfide link is formed within the large subunit homodimers. Requires Mg(2+) as cofactor. In terms of processing, the disulfide bond which can form in the large chain dimeric partners within the hexadecamer appears to be associated with oxidative stress and protein turnover.

Its subcellular location is the plastid. It is found in the chloroplast. It catalyses the reaction 2 (2R)-3-phosphoglycerate + 2 H(+) = D-ribulose 1,5-bisphosphate + CO2 + H2O. It carries out the reaction D-ribulose 1,5-bisphosphate + O2 = 2-phosphoglycolate + (2R)-3-phosphoglycerate + 2 H(+). In terms of biological role, ruBisCO catalyzes two reactions: the carboxylation of D-ribulose 1,5-bisphosphate, the primary event in carbon dioxide fixation, as well as the oxidative fragmentation of the pentose substrate in the photorespiration process. Both reactions occur simultaneously and in competition at the same active site. In Drosera petiolaris (Woolly sundew), this protein is Ribulose bisphosphate carboxylase large chain.